Reading from the N-terminus, the 71-residue chain is Small ribosomal subunit protein bS21 (71 aa).

The protein belongs to the bacterial ribosomal protein bS21 family.

In Chromohalobacter salexigens (strain ATCC BAA-138 / DSM 3043 / CIP 106854 / NCIMB 13768 / 1H11), this protein is Small ribosomal subunit protein bS21.